Reading from the N-terminus, the 212-residue chain is Ribonuclease P protein component 3 (212 aa).

Belongs to the eukaryotic/archaeal RNase P protein component 3 family. In terms of assembly, consists of a catalytic RNA component and at least 5 protein subunits. Forms a heterotetrameric subcomplex with Rnp2. Reconstituted enzyme missing individual protein subunits is suboptimally active, showing each subunit contributes to optimization of activity.

The protein resides in the cytoplasm. The catalysed reaction is Endonucleolytic cleavage of RNA, removing 5'-extranucleotides from tRNA precursor.. Its function is as follows. Part of ribonuclease P, a protein complex that generates mature tRNA molecules by cleaving their 5'-ends. Not absolutely essential for activity in vitro, however it strongly stimulates activity. Binds RNase P RNA. The polypeptide is Ribonuclease P protein component 3 (Pyrococcus horikoshii (strain ATCC 700860 / DSM 12428 / JCM 9974 / NBRC 100139 / OT-3)).